The primary structure comprises 165 residues: Ribosome maturation factor RimM (165 aa).

The PRC barrel domain maps to 90 to 161 (EDEYFIVDLV…LITIRPSGEW (72 aa)).

The protein belongs to the RimM family. In terms of assembly, binds ribosomal protein uS19.

The protein localises to the cytoplasm. Functionally, an accessory protein needed during the final step in the assembly of 30S ribosomal subunit, possibly for assembly of the head region. Essential for efficient processing of 16S rRNA. May be needed both before and after RbfA during the maturation of 16S rRNA. It has affinity for free ribosomal 30S subunits but not for 70S ribosomes. The protein is Ribosome maturation factor RimM of Clostridium perfringens (strain ATCC 13124 / DSM 756 / JCM 1290 / NCIMB 6125 / NCTC 8237 / Type A).